Here is a 72-residue protein sequence, read N- to C-terminus: Large ribosomal subunit protein uL29 (72 aa).

The protein belongs to the universal ribosomal protein uL29 family.

The chain is Large ribosomal subunit protein uL29 from Chlamydia felis (strain Fe/C-56) (Chlamydophila felis).